The following is a 729-amino-acid chain: Neurochondrin (729 aa).

Ser-2 is modified (N-acetylserine). The residue at position 2 (Ser-2) is a Phosphoserine. 2 S-palmitoyl cysteine lipidation sites follow: Cys-3 and Cys-4. Arg-75 carries the post-translational modification Asymmetric dimethylarginine. The residue at position 448 (Ser-448) is a Phosphoserine.

It belongs to the neurochondrin family. Interacts with MCHR1. Interacts with SEMA4C. Interacts with DIAPH1 (via FH3 domain). Interacts with GRM5. Palmitoylated. Palmitoylation by ZDHHC1, ZDHHC3 and ZDHHC11 regulates the association of NCDN with endosome membranes. May also be palmitoylated by ZDHHC7.

Its subcellular location is the cytoplasm. It localises to the cytosol. The protein resides in the endosome membrane. It is found in the cell projection. The protein localises to the dendrite. Its subcellular location is the postsynapse. Probably involved in signal transduction, in the nervous system, via increasing cell surface localization of GRM5 and positively regulating its signaling. Required for the spatial learning process. Acts as a negative regulator of Ca(2+)-calmodulin-dependent protein kinase 2 (CaMK2) phosphorylation. May play a role in modulating melanin-concentrating hormone-mediated functions via its interaction with MCHR1 that interferes with G protein-coupled signal transduction. May be involved in bone metabolism. May also be involved in neurite outgrowth. This chain is Neurochondrin (NCDN), found in Bos taurus (Bovine).